Consider the following 287-residue polypeptide: Large ribosomal subunit protein uL2 (287 aa).

Residues 216 to 287 (RRPEVRGSVM…SKRGRGGRDA (72 aa)) form a disordered region. Residues 271–287 (QRRRRKSSKRGRGGRDA) show a composition bias toward basic residues.

Belongs to the universal ribosomal protein uL2 family. Part of the 50S ribosomal subunit. Forms a bridge to the 30S subunit in the 70S ribosome.

One of the primary rRNA binding proteins. Required for association of the 30S and 50S subunits to form the 70S ribosome, for tRNA binding and peptide bond formation. It has been suggested to have peptidyltransferase activity; this is somewhat controversial. Makes several contacts with the 16S rRNA in the 70S ribosome. The chain is Large ribosomal subunit protein uL2 from Synechococcus sp. (strain ATCC 27144 / PCC 6301 / SAUG 1402/1) (Anacystis nidulans).